The primary structure comprises 114 residues: PDZK1-interacting protein 1 (114 aa).

The Extracellular portion of the chain corresponds to 1–28 (MSVLSLVVLSLLMALPPASCQQGRGNLQ). Residues 29 to 51 (PWMQGLIAVAVFLVLVAIAFAVN) form a helical membrane-spanning segment. The Cytoplasmic portion of the chain corresponds to 52-114 (HFWCQEKPAP…EEGKVCSTPM (63 aa)). Phosphoserine is present on S85.

It belongs to the PDZK1-interacting protein 1/SMIM24 family. In terms of assembly, forms a heterodimer (via N-terminal transmembrane helix) with SLC5A2/SGLT2 (via TM13); this interaction enhances SLC5A2 transporter activity. Interacts with PDZK1.

The protein resides in the apical cell membrane. Auxiliary protein of electrogenic Na(+)-coupled sugar symporter SLC5A2/SGLT2 and SLC5A1/SGLT1. Essential for the transporter activity of SLC5A2/SGLT2 but not SLC5A1/SGLT1. This Bos taurus (Bovine) protein is PDZK1-interacting protein 1.